Reading from the N-terminus, the 116-residue chain is Endoribonuclease EndoA (116 aa).

This sequence belongs to the PemK/MazF family. As to quaternary structure, homodimer. Forms a complex with antitoxin EndoAI in which the toxin activity is inhibited. One dimer binds a ssRNA substrate, forms a heterohexamer composed of alternating toxin and antitoxin homodimers which inhibits the endoribonuclease activity. Antitoxin prevents RNA binding to the endoribonuclease.

Its function is as follows. Toxic component of a type II toxin-antitoxin (TA) system. Specific for 5'-UACAU-3' sequences, cleaving after the first U. Yields cleavage products with 3' phosphate and 5' hydroxyl groups. Cannot digest substrate with a UUdUACAUAA cleavage site. Overexpression is toxic for cell growth (shown in E.coli), probably by inhibiting protein synthesis through the cleavage of single-stranded RNA. The toxicity is reversed by the antitoxin EndoAI. Toxin activity cannot be inhibited by MazE from E.coli. The EndoA-EndoAI complex does not seem to bind its own promoter. This is Endoribonuclease EndoA from Bacillus subtilis (strain 168).